Consider the following 28-residue polypeptide: Grammistin Gs A (28 aa).

The protein belongs to the grammistin family. Group 3 subfamily. As to quaternary structure, exists as aggregates of 3-4 molecules. As to expression, expressed by the skin glands.

Its subcellular location is the secreted. Its function is as follows. Thanks to its amphiphilic alpha-helice(s), it may integrate into membrane phospholipids, leading to lysis of the membrane. Has no substantial hemolytic activity. Has antibacterial activity with a broad spectrum against various species of bacteria including both Gram-positive and Gram-negative groups. This is Grammistin Gs A from Grammistes sexlineatus (Goldenstriped soapfish).